Reading from the N-terminus, the 391-residue chain is Ectodysplasin-A (391 aa).

Residues 1–21 (MGYPEVERREPLPAAAPRERG) show a composition bias toward basic and acidic residues. Residues 1-28 (MGYPEVERREPLPAAAPRERGSQGCGCR) are disordered. Over 1-41 (MGYPEVERREPLPAAAPRERGSQGCGCRGAPARAGEGNSCR) the chain is Cytoplasmic. A helical; Signal-anchor for type II membrane protein transmembrane segment spans residues 42–62 (LFLGFFGLSLALHLLTLCCYL). Residues 63–391 (ELRSELRRER…AIRLGEAPAS (329 aa)) are Extracellular-facing. Disordered regions lie at residues 72-129 (RGTE…DSQD) and 146-244 (YSEE…TGTR). The segment covering 86-96 (TSGTLSSPGSL) has biased composition (low complexity). The Collagen-like domain occupies 180-229 (GPPGPNGPPGPPGPPGPQGPPGIPGIPGIPGTTVMGPPGPPGPPGPQGPP). Pro residues-rich tracts occupy residues 181-203 (PPGP…PGIP) and 216-228 (PPGP…PQGP). The region spanning 249–385 (AVVHLQGQGS…HTTFFGAIRL (137 aa)) is the THD domain. An N-linked (GlcNAc...) asparagine glycan is attached at N313. Cysteines 332 and 346 form a disulfide. N372 is a glycosylation site (N-linked (GlcNAc...) asparagine).

Belongs to the tumor necrosis factor family. In terms of assembly, homotrimer. The homotrimers may then dimerize and form higher-order oligomers. In terms of processing, N-glycosylated. Post-translationally, processing by furin produces a secreted form.

It is found in the cell membrane. It localises to the secreted. Cytokine which is involved in epithelial-mesenchymal signaling during morphogenesis of ectodermal organs. Functions as a ligand activating the DEATH-domain containing receptors EDAR and EDA2R. Isoform TAA binds only to the receptor EDAR, while isoform TA-A2 binds exclusively to the receptor EDA2R. May also play a role in cell adhesion. Its function is as follows. Isoform TAA binds only to the receptor EDAR, while isoform TA-A2 binds exclusively to the receptor EDA2R. Functionally, isoform TA-A2 binds exclusively to the receptor EDA2R. This chain is Ectodysplasin-A (Eda), found in Mus musculus (Mouse).